The sequence spans 234 residues: Alpha N-terminal protein methyltransferase 1 (234 aa).

S-adenosyl-L-methionine-binding positions include G71, R76, 93–95, 120–121, and Q136; these read DVV and LQ.

This sequence belongs to the methyltransferase superfamily. NTM1 family. In terms of tissue distribution, expressed in uterine cells and PVT neurons of the tail. Expressed in pharynx, intestine and DVB tail neuron.

The catalysed reaction is N-terminal L-alanyl-L-prolyl-L-lysyl-[protein] + 3 S-adenosyl-L-methionine = N-terminal N,N,N-trimethyl-L-alanyl-L-prolyl-L-lysyl-[protein] + 3 S-adenosyl-L-homocysteine + 3 H(+). It carries out the reaction N-terminal L-seryl-L-prolyl-L-lysyl-[protein] + 3 S-adenosyl-L-methionine = N-terminal N,N,N-trimethyl-L-seryl-L-prolyl-L-lysyl-[protein] + 3 S-adenosyl-L-homocysteine + 3 H(+). It catalyses the reaction N-terminal L-prolyl-L-prolyl-L-lysyl-[protein] + 2 S-adenosyl-L-methionine = N-terminal N,N-dimethyl-L-prolyl-L-prolyl-L-lysyl-[protein] + 2 S-adenosyl-L-homocysteine + 2 H(+). Functionally, alpha-N-methyltransferase that methylates the N-terminus of target proteins containing the N-terminal motif [Ala/Pro/Ser]-Pro-Lys when the initiator Met is cleaved. Specifically catalyzes mono-, di- or tri-methylation of exposed alpha-amino group of Ala or Ser residue in the [Ala/Ser]-Pro-Lys motif and mono- or di-methylation of Pro in the Pro-Pro-Lys motif. Probably required for the synthesis of neurotransmitter melatonin from serotonin, which plays a role in promoting a sleep-like state, called lethargus, during larval development. In Caenorhabditis elegans, this protein is Alpha N-terminal protein methyltransferase 1.